The primary structure comprises 124 residues: Transcription initiation factor IIA subunit 2 (124 aa).

The protein belongs to the TFIIA subunit 2 family. As to quaternary structure, TFIIA is a heterodimer composed of the large TOA1 and the small TOA2 subunits.

It is found in the nucleus. TFIIA is a component of the transcription machinery of RNA polymerase II and plays an important role in transcriptional activation. TFIIA in a complex with tbp mediates transcriptional activity. This chain is Transcription initiation factor IIA subunit 2 (TOA2), found in Cryptococcus neoformans var. neoformans serotype D (strain JEC21 / ATCC MYA-565) (Filobasidiella neoformans).